A 431-amino-acid chain; its full sequence is NADH-quinone oxidoreductase chain 1 (431 aa).

54 to 63 (GRGGAGFPTG) contacts NAD(+). Residue 167-214 (GAGAYICGEETALLESLEGKKGMPRMKPPFPAGAGLYGCPTTVNNVES) coordinates FMN. 4 residues coordinate [4Fe-4S] cluster: C346, C349, C352, and C392.

The protein belongs to the complex I 51 kDa subunit family. As to quaternary structure, NDH-1 is composed of at least 14 different subunits, Nqo1 to Nqo14. The complex has a L-shaped structure, with the hydrophobic arm (subunits Nqo7, Nqo8, Nqo10 to Nqo14) embedded in the inner membrane and the hydrophilic peripheral arm (subunits Nqo1 to Nqo6, Nqo9) protruding into the bacterial cytoplasm. The hydrophilic domain contains all the redox centers. FMN serves as cofactor. It depends on [4Fe-4S] cluster as a cofactor.

It is found in the cell inner membrane. The enzyme catalyses a quinone + NADH + 5 H(+)(in) = a quinol + NAD(+) + 4 H(+)(out). Functionally, NDH-1 shuttles electrons from NADH, via FMN and iron-sulfur (Fe-S) centers, to quinones in the respiratory chain. The immediate electron acceptor for the enzyme in this species is believed to be ubiquinone. Couples the redox reaction to proton translocation (for every two electrons transferred, four hydrogen ions are translocated across the cytoplasmic membrane), and thus conserves the redox energy in a proton gradient. The chain is NADH-quinone oxidoreductase chain 1 (nqo1) from Paracoccus denitrificans.